The chain runs to 380 residues: Lipid-A-disaccharide synthase (380 aa).

This sequence belongs to the LpxB family.

The enzyme catalyses a lipid X + a UDP-2-N,3-O-bis[(3R)-3-hydroxyacyl]-alpha-D-glucosamine = a lipid A disaccharide + UDP + H(+). Its pathway is bacterial outer membrane biogenesis; LPS lipid A biosynthesis. Functionally, condensation of UDP-2,3-diacylglucosamine and 2,3-diacylglucosamine-1-phosphate to form lipid A disaccharide, a precursor of lipid A, a phosphorylated glycolipid that anchors the lipopolysaccharide to the outer membrane of the cell. This Pseudomonas syringae pv. syringae (strain B728a) protein is Lipid-A-disaccharide synthase.